The following is an 855-amino-acid chain: Envelope glycoprotein gp150 (855 aa).

The Extracellular portion of the chain corresponds to 1-784 (MAEGFAVNRQ…WLGNIPRYLK (784 aa)). 17 N-linked (GlcNAc...) asparagine; by host glycosylation sites follow: N220, N258, N269, N274, N298, N330, N336, N342, N418, N422, N448, N469, N481, N499, N518, N531, and N548. Residues 615 to 635 (VMLALATVLSMAGAGTGATAI) are fusion peptide. Positions 642–692 (HQVLATHQETIEKITEALKVNNLRLVTLEHQVLVIGLKVEAIEKFLYTAFA) form a coiled coil. Residues 661-679 (VNNLRLVTLEHQVLVIGLK) form an immunosuppression region. N-linked (GlcNAc...) asparagine; by host glycans are attached at residues N716, N720, and N736. A coiled-coil region spans residues 735–771 (YNQTKDLQQKFYEIIMDMEQNNVQGRKGLQQLQEWED). The chain crosses the membrane as a helical span at residues 785–805 (GLLGGILGIGLGVLLLILCLP). Topologically, residues 806–855 (TLVDCIRNCISKVLGYTVIAMPEVEEEEIQPPMELRRNGRQCDMSEKEEE) are cytoplasmic. The segment at 835–855 (QPPMELRRNGRQCDMSEKEEE) is disordered.

In terms of assembly, the mature envelope protein (Env) consists of a trimer of SU-TM heterodimers attached by noncovalent interactions or by a labile interchain disulfide bond. Specific enzymatic cleavages in vivo yield mature proteins. Envelope glycoproteins are synthesized as an inactive precursor that is N-glycosylated and processed likely by host cell furin or by a furin-like protease in the Golgi to yield the mature SU and TM proteins. The cleavage site between SU and TM requires the minimal sequence [KR]-X-[KR]-R.

It localises to the virion membrane. The protein resides in the host cell membrane. Functionally, the surface protein (SU) attaches the virus to the host cell by binding to its receptor. This interaction triggers the refolding of the transmembrane protein (TM) and is thought to activate its fusogenic potential by unmasking its fusion peptide. Fusion occurs at the host cell plasma membrane. Its function is as follows. The transmembrane protein (TM) acts as a class I viral fusion protein. Under the current model, the protein has at least 3 conformational states: pre-fusion native state, pre-hairpin intermediate state, and post-fusion hairpin state. During viral and target cell membrane fusion, the coiled coil regions (heptad repeats) assume a trimer-of-hairpins structure, positioning the fusion peptide in close proximity to the C-terminal region of the ectodomain. The formation of this structure appears to drive apposition and subsequent fusion of viral and target cell membranes. Membranes fusion leads to delivery of the nucleocapsid into the cytoplasm. In Feline immunodeficiency virus (strain UK2) (FIV), this protein is Envelope glycoprotein gp150 (env).